We begin with the raw amino-acid sequence, 1297 residues long: DNA-directed RNA polymerase subunit beta' (1297 aa).

Residues C60, C62, C75, and C78 each contribute to the Zn(2+) site. Positions 535, 537, and 539 each coordinate Mg(2+). Zn(2+) is bound by residues C883, C961, C968, and C971.

It belongs to the RNA polymerase beta' chain family. In terms of assembly, the RNAP catalytic core consists of 2 alpha, 1 beta, 1 beta' and 1 omega subunit. When a sigma factor is associated with the core the holoenzyme is formed, which can initiate transcription. Requires Mg(2+) as cofactor. Zn(2+) serves as cofactor.

It catalyses the reaction RNA(n) + a ribonucleoside 5'-triphosphate = RNA(n+1) + diphosphate. DNA-dependent RNA polymerase catalyzes the transcription of DNA into RNA using the four ribonucleoside triphosphates as substrates. This is DNA-directed RNA polymerase subunit beta' from Salinispora tropica (strain ATCC BAA-916 / DSM 44818 / JCM 13857 / NBRC 105044 / CNB-440).